The sequence spans 580 residues: MDHLIQFWPILKRLIIYAIPWKKKIILAFFLLLSGATSEVLGPILISYFINNILSQHQLNFQLILIIIVIFIMLQILAVFFNYFQSILFNKIAVGIVNKLRNDVMKAALNQPISEFDSQPIGQMISKVTNDTEVIKELYDTVGPTFFRSITLIIIILFAMFTLEWHMAIITIFIIPLVIIVMSIYQYYSTPLLRNVRYYVANINNKFNETINGMNVIQQFRQQTRFENNIKESSELHYLARMKILKLDGFLLRPLLSLLSALVLCSFMFLFSYFSIGVYEVGVLYAFITYLGRLNEPLISITIQQSILQQAIVAGERIFSLIDSPKQKYGNNEEEIKSGKINIKNLSFKYKESGENILNNINIYIPSKSFVAFVGQTGSGKSTLANLLMGYYPIKHGKIYLDDKSINCISHDVLRKNILMVQQDPIVLADTFSSNITLGKKISEEKIWNVLKTVHLSSLVQSMPKGIYSILGEEGNNLSLGQKQLLAIARILVRNPKILILDEATANIDSGTEKLIQTTLSSIRAKTTLVVIAHRLSTVIEADMIVVLKKGKIVELGTHKQLLEKKGFYWKMYNFQLFNC.

The ABC transmembrane type-1 domain occupies 25–310; that stretch reads IILAFFLLLS…ITIQQSILQQ (286 aa). A run of 5 helical transmembrane segments spans residues 26 to 46, 61 to 81, 142 to 162, 165 to 185, and 258 to 278; these read ILAFFLLLSGATSEVLGPILI, FQLILIIIVIFIMLQILAVFF, VGPTFFRSITLIIIILFAMFT, WHMAIITIFIIPLVIIVMSIY, and LLSALVLCSFMFLFSYFSIGV. Positions 341–575 constitute an ABC transporter domain; sequence INIKNLSFKY…KGFYWKMYNF (235 aa). 375-382 is a binding site for ATP; the sequence is GQTGSGKS.

Belongs to the ABC transporter superfamily. Drug exporter-2 (TC 3.A.1.117) family.

Its subcellular location is the cell membrane. The enzyme catalyses ATP + H2O + xenobioticSide 1 = ADP + phosphate + xenobioticSide 2.. The sequence is that of Multidrug resistance-like ATP-binding protein MdlB (mdlB) from Buchnera aphidicola subsp. Schizaphis graminum (strain Sg).